A 199-amino-acid polypeptide reads, in one-letter code: Pyridoxine/pyridoxamine 5'-phosphate oxidase (199 aa).

Residues arginine 44–lysine 49, tyrosine 59–threonine 60, lysine 66, and glutamine 91 contribute to the FMN site. Lysine 49 provides a ligand contact to substrate. 3 residues coordinate substrate: tyrosine 109, arginine 113, and serine 117. Residues glutamine 126 to serine 127 and tryptophan 171 contribute to the FMN site. A substrate-binding site is contributed by arginine 177–histidine 179. Arginine 181 lines the FMN pocket.

Belongs to the pyridoxamine 5'-phosphate oxidase family. As to quaternary structure, homodimer. Requires FMN as cofactor.

It catalyses the reaction pyridoxamine 5'-phosphate + O2 + H2O = pyridoxal 5'-phosphate + H2O2 + NH4(+). It carries out the reaction pyridoxine 5'-phosphate + O2 = pyridoxal 5'-phosphate + H2O2. Its pathway is cofactor metabolism; pyridoxal 5'-phosphate salvage; pyridoxal 5'-phosphate from pyridoxamine 5'-phosphate: step 1/1. The protein operates within cofactor metabolism; pyridoxal 5'-phosphate salvage; pyridoxal 5'-phosphate from pyridoxine 5'-phosphate: step 1/1. Catalyzes the oxidation of either pyridoxine 5'-phosphate (PNP) or pyridoxamine 5'-phosphate (PMP) into pyridoxal 5'-phosphate (PLP). This chain is Pyridoxine/pyridoxamine 5'-phosphate oxidase, found in Xanthomonas campestris pv. campestris (strain 8004).